The following is a 296-amino-acid chain: Malonyl-[acyl-carrier protein] O-methyltransferase (296 aa).

It belongs to the methyltransferase superfamily.

The catalysed reaction is malonyl-[ACP] + S-adenosyl-L-methionine = malonyl-[ACP] methyl ester + S-adenosyl-L-homocysteine. It functions in the pathway cofactor biosynthesis; biotin biosynthesis. Functionally, converts the free carboxyl group of a malonyl-thioester to its methyl ester by transfer of a methyl group from S-adenosyl-L-methionine (SAM). It allows to synthesize pimeloyl-ACP via the fatty acid synthetic pathway. This Methylovorus sp. (strain MP688) protein is Malonyl-[acyl-carrier protein] O-methyltransferase.